The following is a 416-amino-acid chain: Cyclic dinucleotide synthase CdnG (416 aa).

Ser-72 contributes to the GTP binding site. Active-site residues include Asp-89, Asp-91, and Asp-140. Residue Asp-91 participates in GTP binding. Mg(2+) is bound at residue Asp-91. The tract at residues 145–167 (RRRAPKEKEGEIPHAKKGTRSDP) is disordered. Over residues 150-167 (KEKEGEIPHAKKGTRSDP) the composition is skewed to basic and acidic residues. The GTP site is built by Lys-236, Ser-253, Glu-305, Arg-306, and Asp-309.

The protein belongs to the CD-NTase family. G10 subfamily. It depends on Mg(2+) as a cofactor.

The catalysed reaction is UTP + GTP = 3',3'-cGMP-UMP + 2 diphosphate. It carries out the reaction GTP + ATP = 3',3'-cGAMP + 2 diphosphate. The enzyme catalyses 2 ATP = 3',3'-c-di-AMP + 2 diphosphate. Cyclic nucleotide synthase (second messenger synthase) of a CBASS antivirus system. CBASS (cyclic oligonucleotide-based antiphage signaling system) provides immunity against bacteriophage. The CD-NTase protein synthesizes cyclic nucleotides in response to infection; these serve as specific second messenger signals. The signals activate a diverse range of effectors, leading to bacterial cell death and thus abortive phage infection. A type II-short CBASS system. In terms of biological role, cyclic dinucleotide synthase that catalyzes the synthesis of predominantly 3'3'-cGMP-UMP, followed by 3'3'-cGAMP and c-di-AMP in a reaction mixture of ATP, CTP, GTP and UTP. The cyclic nucleotide products are second messengers that activate the CBASS Cap5 effector nuclease, leading to DNA degradation and probably cell death. Cyclic nucleotides do not activate the effector equally; reactions with ATP/GTP, ATP/UTP and ATP alone activate Cap5, whereas reaction with GTP/UTP (the major in vitro product) do not. This chain is Cyclic dinucleotide synthase CdnG, found in Bradyrhizobium diazoefficiens (strain JCM 10833 / BCRC 13528 / IAM 13628 / NBRC 14792 / USDA 110).